A 1072-amino-acid chain; its full sequence is MTYVTYLHKPSSIRNAVFCKFVNASSWNVIVAKVNCLEVYSYENNRLCLITSANIFAKIVNVKAFKPVSSPTDHIIVATDSFRYFTLFWDANDNTVSNGIKIQDCSERSLRESQSGPLLLVDPFQRVICLHVYQGLLTIIPIFKSKKRFMTSHNNPSLHDNFSVRIQELNVVDIAMLYNSSRPSLAVLYKDSKSIVHLSTYKINVREQEIDEDDVVCHDIEEGKLIPSENGGVFVFGEMYVYYISKDIQVSKLLLTYPITAFSPSISNDPETGLDSSIYIVADESGMLYKFKALFTDETVSMELEKLGESSIASCLIALPDNHLFVGSHFNNSVLLQLPSITKNNHKLEILQNFVNIAPISDFIIDDDQTGSSIITCSGAYKDGTLRIIRNSINIENVALIEMEGIKDFFSVSFRANYDNYIFLSLICETRAIIVSPEGVFSANHDLSCEESTIFVSTIYGNSQILQITTKEIRLFDGKKLHSWISPMSITCGSSFADNVCVAVAGGLILFFEGITEVGRYQCDTEVSSLCFTEENVVYVGLWSADIIMLTYCQDGISLTHSLKLTDIPRSIVYSQKYGDDGGTLYVSTNNGYVLMFNFQNGQVIEHSLRRNQLGVAPIILKHFDSKEKNAIFALGEKPQLMYYESDKLVITPLSCTEMLNISSYVNPSLGVNMLYCTNSYISLAKMSEIRSLNVQTVSVKGFPRRICSNSLFYFVLCMQLEESIGTQEQRLLSFLRVYEKNTLSEIAHHKFNEYEMVESIILMNDDKRVVVGTGFNFPDQDAPDSGRLMVFEMTSDNNIEMQAEHKVQGSVNTLVLYKHLIVAGINASVCIFEYEHGTMHVRNSIRTPTYTIDISVNQDEIIAADLMKSITVLQFIDDQLIEVARDYHPLWATSVEILSERKYFVTEADGNAVILLRDNVSPQLSDRKKLRWYKKFYLGELINKTRHCTFIEPQDKSLVTPQLLCATVDGSLMIVGDAGMSNTPLLLQLQDNIRKVIPSFGGLSHKEWKEYRGENETSPSDLIDGSLIESILGLREPILNEIVNGGHEGTKLDISVQDLKSIIENLEKLHP.

The protein belongs to the DDB1 family. In terms of assembly, interacts with csn1, csn2, cdt2, ckn1, iqw1 and wdr21.

It is found in the nucleus. It functions in the pathway protein modification; protein ubiquitination. Component of an E3 ubiquitin-protein ligase that includes cul4. Required for ubiquitination and the subsequent degradation of the DNA replication licensing factor cdt1 and of the ribonucleotide reductase inhibitor spd1. Also required for transcription-coupled nucleotide excision repair. The polypeptide is DNA damage-binding protein 1 (ddb1) (Schizosaccharomyces pombe (strain 972 / ATCC 24843) (Fission yeast)).